The chain runs to 458 residues: Alpha-glucosides-binding periplasmic protein AglE (458 aa).

Positions 1 to 27 (MKRSLLIGVAAFALLAGTAGLAGTAGA) are cleaved as a signal peptide.

This sequence belongs to the bacterial solute-binding protein 1 family.

It localises to the periplasm. Its function is as follows. Part of the binding-protein-dependent transport system for alpha-glucosides such as sucrose, maltose and trehalose. This chain is Alpha-glucosides-binding periplasmic protein AglE (aglE), found in Rhizobium meliloti (strain 1021) (Ensifer meliloti).